Reading from the N-terminus, the 181-residue chain is Histone deacetylase complex subunit SAP30L-A (181 aa).

2 disulfide bridges follow: cysteine 26–cysteine 27 and cysteine 35–cysteine 71. The Atypical zinc-finger motif lies at 26–74 (CCLIDGGERCPRPAGNASFSKRVQKSISQKKLKLDIDKNVRHLYICDFH). The interval 82–103 (RNKRKRKTSDDGGDSPEHETDI) is disordered. The Nuclear localization signal (NLS) motif lies at 83–88 (NKRKRK). The important for DNA and phosphoinositide binding stretch occupies residues 85-87 (RKR).

This sequence belongs to the SAP30 family. As to quaternary structure, interacts with components of the histone deacetylase complex sin3a, hdac1 and hdac2. Binds histones and nucleosomes.

The protein localises to the nucleus. It localises to the nucleolus. In terms of biological role, functions as a transcription repressor, probably via its interaction with histone deacetylase complexes. Involved in the functional recruitment of the class 1 Sin3-histone deacetylase complex (HDAC) to the nucleolus. Binds DNA, apparently without sequence-specificity, and bends bound double-stranded DNA. Binds phosphoinositol phosphates (phosphoinositol 3-phosphate, phosphoinositol 4-phosphate and phosphoinositol 5-phosphate) via the same basic sequence motif that mediates DNA binding and nuclear import. The polypeptide is Histone deacetylase complex subunit SAP30L-A (sap30l-a) (Xenopus laevis (African clawed frog)).